The chain runs to 274 residues: Protein RecA (274 aa).

An ATP-binding site is contributed by 43 to 50; it reads GPESSGKT.

This sequence belongs to the RecA family.

It is found in the cytoplasm. Can catalyze the hydrolysis of ATP in the presence of single-stranded DNA, the ATP-dependent uptake of single-stranded DNA by duplex DNA, and the ATP-dependent hybridization of homologous single-stranded DNAs. It interacts with LexA causing its activation and leading to its autocatalytic cleavage. In Neisseria pharyngis, this protein is Protein RecA.